The following is a 156-amino-acid chain: Large ribosomal subunit protein uL15 (156 aa).

A disordered region spans residues 25–48 (RGIGCGKGKTSGRGHKGQKARSGV). The span at 34 to 43 (TSGRGHKGQK) shows a compositional bias: basic residues.

It belongs to the universal ribosomal protein uL15 family. As to quaternary structure, part of the 50S ribosomal subunit.

Binds to the 23S rRNA. The polypeptide is Large ribosomal subunit protein uL15 (Wolbachia pipientis subsp. Culex pipiens (strain wPip)).